The chain runs to 423 residues: MVTTHHLCLLRSTVLSVPVRLRAPRAPPHPRLPTASASASSYHGPTHLRRLRPLRAAAAAAGGASPDGADGAKRPAPAAASSSLGAALVGFARSNFLPLALIAGIALALMDPTLGCLAHKYSLSKYSTFGIFLISGLTLRTKELGAALEAWPAGLFGLASILLFTPFLAQFIMQIKFFPHEFITGLAMFCCMPTTLSSGVTLTQLVGGNTALALAMTAISNLLGIMIVPLSLAKYIGVGAGVSLPTEKLFKSLVTTLLIPIILGKVARETSKGIAGFVDGNKQGFSVTSAILLSLVPWIQVSRSRSLLLSVQPKAFAVAVTVGVLLHFALLAFNAAALHILSRLEQRGVSVFARNEYARAVILVASQKTLPVLVAVVEQLGGALGESGLLVIPCVAAHINQIIIDSIIVNWWRQRDQQFANAK.

A chloroplast-targeting transit peptide spans 1 to 55 (MVTTHHLCLLRSTVLSVPVRLRAPRAPPHPRLPTASASASSYHGPTHLRRLRPLR). Residues 23–45 (APRAPPHPRLPTASASASSYHGP) are disordered. Transmembrane regions (helical) follow at residues 96 to 116 (FLPL…TLGC), 123 to 140 (LSKY…LTLR), 153 to 173 (AGLF…QFIM), 182 to 202 (FITG…GVTL), 212 to 232 (LALA…PLSL), 244 to 264 (LPTE…IILG), 284 to 301 (GFSV…WIQV), 315 to 335 (AFAV…AFNA), and 389 to 409 (LLVI…SIIV).

The protein belongs to the bile acid:sodium symporter (BASS) (TC 2.A.28) family.

The protein resides in the membrane. Its subcellular location is the plastid. It localises to the chloroplast envelope. May function as sodium-coupled metabolite transporter across the chloroplast envelope. The sequence is that of Probable sodium/metabolite cotransporter BASS4, chloroplastic (BASS4) from Oryza sativa subsp. indica (Rice).